A 217-amino-acid polypeptide reads, in one-letter code: Nascent polypeptide-associated complex subunit alpha (217 aa).

The interval 1–45 (MPELTEIKSEAAPSTSAEAKPEDVRVEDDGSDSDSDGGMPGLEEA) is disordered. Over residues 19–28 (AKPEDVRVED) the composition is skewed to basic and acidic residues. The NAC-A/B domain maps to 70–135 (SRGEKKARKI…AKIEDLSQQA (66 aa)). The disordered stretch occupies residues 154–177 (SVGATTSVAPIAEEDEEDVDDTGV). The span at 165 to 176 (AEEDEEDVDDTG) shows a compositional bias: acidic residues. Residues 177-217 (VDEKDIELVITQANTTRAKAIKALKNNNNDIVNAIMELTML) form the UBA domain.

The protein belongs to the NAC-alpha family. In terms of assembly, part of the nascent polypeptide-associated complex (NAC), consisting of Nac-alpha and bicaudal (bic).

Its function is as follows. May promote appropriate targeting of ribosome-nascent polypeptide complexes. Required for correct localization of the osk/oskar protein to the posterior pole during embryonic development. The osk protein directs the recruitment of molecules responsible for posterior body patterning and germline formation in the embryo. The sequence is that of Nascent polypeptide-associated complex subunit alpha (Nacalpha) from Drosophila melanogaster (Fruit fly).